The sequence spans 526 residues: PTS system alpha-glucoside-specific EIICB component (526 aa).

The PTS EIIC type-1 domain occupies M1 to D417. A run of 12 helical transmembrane segments spans residues L12–L32, G59–A79, L88–W108, I132–I152, L173–W193, I200–F220, I224–V244, G274–M294, I305–P325, F330–A350, F355–L375, and G381–F401. Residues S447 to N526 form the PTS EIIB type-1 domain. C469 (phosphocysteine intermediate; for EIIB activity) is an active-site residue.

The protein localises to the cell membrane. Its function is as follows. The phosphoenolpyruvate-dependent sugar phosphotransferase system (sugar PTS), a major carbohydrate active -transport system, catalyzes the phosphorylation of incoming sugar substrates concomitantly with their translocation across the cell membrane. This system is involved in alpha-glucoside transport. The chain is PTS system alpha-glucoside-specific EIICB component (malB) from Fusobacterium mortiferum.